An 84-amino-acid chain; its full sequence is Serine palmitoyltransferase-regulating protein TSC3 (84 aa).

The chain crosses the membrane as a helical span at residues 63-83 (LHTIFLVVVSLSLFGLLKYIF).

The protein resides in the endoplasmic reticulum membrane. Functionally, stimulates the activity of serine palmitoyltransferase (SPT), and thus plays a role in the biosynthesis of sphingolipids. The polypeptide is Serine palmitoyltransferase-regulating protein TSC3 (TSC3) (Kluyveromyces lactis (strain ATCC 8585 / CBS 2359 / DSM 70799 / NBRC 1267 / NRRL Y-1140 / WM37) (Yeast)).